The following is a 143-amino-acid chain: Large ribosomal subunit protein uL11 (143 aa).

It belongs to the universal ribosomal protein uL11 family. In terms of assembly, part of the ribosomal stalk of the 50S ribosomal subunit. Interacts with L10 and the large rRNA to form the base of the stalk. L10 forms an elongated spine to which L12 dimers bind in a sequential fashion forming a multimeric L10(L12)X complex. One or more lysine residues are methylated.

In terms of biological role, forms part of the ribosomal stalk which helps the ribosome interact with GTP-bound translation factors. This chain is Large ribosomal subunit protein uL11, found in Thiobacillus denitrificans (strain ATCC 25259 / T1).